We begin with the raw amino-acid sequence, 710 residues long: DNA ligase (710 aa).

The interval methionine 1 to threonine 36 is disordered. Residues aspartate 63–aspartate 67, serine 111–isoleucine 112, and glutamate 147 each bind NAD(+). Lysine 149 acts as the N6-AMP-lysine intermediate in catalysis. 3 residues coordinate NAD(+): arginine 170, glutamate 206, and lysine 353. Residues cysteine 444, cysteine 447, cysteine 460, and cysteine 466 each contribute to the Zn(2+) site. In terms of domain architecture, BRCT spans glutamate 623 to glutamate 710. The tract at residues alanine 657–valine 689 is disordered.

Belongs to the NAD-dependent DNA ligase family. LigA subfamily. The cofactor is Mg(2+). It depends on Mn(2+) as a cofactor.

The catalysed reaction is NAD(+) + (deoxyribonucleotide)n-3'-hydroxyl + 5'-phospho-(deoxyribonucleotide)m = (deoxyribonucleotide)n+m + AMP + beta-nicotinamide D-nucleotide.. DNA ligase that catalyzes the formation of phosphodiester linkages between 5'-phosphoryl and 3'-hydroxyl groups in double-stranded DNA using NAD as a coenzyme and as the energy source for the reaction. It is essential for DNA replication and repair of damaged DNA. This is DNA ligase from Halorubrum lacusprofundi (strain ATCC 49239 / DSM 5036 / JCM 8891 / ACAM 34).